Reading from the N-terminus, the 556-residue chain is Glypican-4 (556 aa).

An N-terminal signal peptide occupies residues 1-18; it reads MARFGLPALLCTLAVLSA. Phosphoserine is present on serine 357. O-linked (Xyl...) (glycosaminoglycan) serine glycosylation is found at serine 494, serine 498, and serine 500. Residue asparagine 514 is glycosylated (N-linked (GlcNAc...) asparagine). A lipid anchor (GPI-anchor amidated serine) is attached at serine 529. Residues 530 to 556 constitute a propeptide, removed in mature form; sequence AGVRPGAQAYLLTVFCILFLVMQREWR.

It belongs to the glypican family.

The protein localises to the cell membrane. It is found in the secreted. It localises to the extracellular space. Its function is as follows. Cell surface proteoglycan that bears heparan sulfate. May be involved in the development of kidney tubules and of the central nervous system. The protein is Glypican-4 (GPC4) of Homo sapiens (Human).